The chain runs to 525 residues: Peptide chain release factor 3 (525 aa).

Residues A8–Q276 enclose the tr-type G domain. GTP contacts are provided by residues S17–T24, D85–H89, and N139–D142.

This sequence belongs to the TRAFAC class translation factor GTPase superfamily. Classic translation factor GTPase family. PrfC subfamily.

Its subcellular location is the cytoplasm. Increases the formation of ribosomal termination complexes and stimulates activities of RF-1 and RF-2. It binds guanine nucleotides and has strong preference for UGA stop codons. It may interact directly with the ribosome. The stimulation of RF-1 and RF-2 is significantly reduced by GTP and GDP, but not by GMP. This chain is Peptide chain release factor 3, found in Coxiella burnetii (strain CbuK_Q154) (Coxiella burnetii (strain Q154)).